The sequence spans 480 residues: UDP-N-acetylmuramate--L-alanine ligase (480 aa).

122-128 (GTHGKTT) lines the ATP pocket.

It belongs to the MurCDEF family.

Its subcellular location is the cytoplasm. It catalyses the reaction UDP-N-acetyl-alpha-D-muramate + L-alanine + ATP = UDP-N-acetyl-alpha-D-muramoyl-L-alanine + ADP + phosphate + H(+). Its pathway is cell wall biogenesis; peptidoglycan biosynthesis. Its function is as follows. Cell wall formation. This is UDP-N-acetylmuramate--L-alanine ligase from Pseudomonas aeruginosa (strain LESB58).